Reading from the N-terminus, the 185-residue chain is Ribosome-recycling factor (185 aa).

The protein belongs to the RRF family.

Its subcellular location is the cytoplasm. Functionally, responsible for the release of ribosomes from messenger RNA at the termination of protein biosynthesis. May increase the efficiency of translation by recycling ribosomes from one round of translation to another. In Bacillus pumilus (strain SAFR-032), this protein is Ribosome-recycling factor.